A 122-amino-acid polypeptide reads, in one-letter code: Large ribosomal subunit protein uL14 (122 aa).

The protein belongs to the universal ribosomal protein uL14 family. Part of the 50S ribosomal subunit. Forms a cluster with proteins L3 and L19. In the 70S ribosome, L14 and L19 interact and together make contacts with the 16S rRNA in bridges B5 and B8.

In terms of biological role, binds to 23S rRNA. Forms part of two intersubunit bridges in the 70S ribosome. The polypeptide is Large ribosomal subunit protein uL14 (Mycobacterium sp. (strain KMS)).